A 218-amino-acid chain; its full sequence is Thiopurine S-methyltransferase (218 aa).

S-adenosyl-L-methionine is bound by residues Trp-10, Leu-45, Glu-66, and Arg-123.

The protein belongs to the class I-like SAM-binding methyltransferase superfamily. TPMT family.

It is found in the cytoplasm. The catalysed reaction is S-adenosyl-L-methionine + a thiopurine = S-adenosyl-L-homocysteine + a thiopurine S-methylether.. This Pseudomonas fluorescens (strain SBW25) protein is Thiopurine S-methyltransferase.